A 645-amino-acid polypeptide reads, in one-letter code: Chaperone protein DnaK (645 aa).

Thr201 is subject to Phosphothreonine; by autocatalysis. Over residues Asn606–Ser629 the composition is skewed to low complexity. Positions Asn606–Lys645 are disordered. Positions Lys630 to Lys645 are enriched in basic and acidic residues.

It belongs to the heat shock protein 70 family.

Acts as a chaperone. This is Chaperone protein DnaK from Ehrlichia ruminantium (strain Welgevonden).